The sequence spans 448 residues: tRNA-2-methylthio-N(6)-dimethylallyladenosine synthase (448 aa).

Residues 2 to 119 (KKLYIKTFGC…LSDLIAQRRK (118 aa)) enclose the MTTase N-terminal domain. [4Fe-4S] cluster-binding residues include cysteine 11, cysteine 48, cysteine 82, cysteine 156, cysteine 160, and cysteine 163. Residues 142–375 (RQTRGSAYVS…LALIEGQSNQ (234 aa)) form the Radical SAM core domain. A TRAM domain is found at 378–444 (QKMLGKTERV…NYTLRGELVE (67 aa)).

It belongs to the methylthiotransferase family. MiaB subfamily. Monomer. [4Fe-4S] cluster serves as cofactor.

The protein localises to the cytoplasm. The catalysed reaction is N(6)-dimethylallyladenosine(37) in tRNA + (sulfur carrier)-SH + AH2 + 2 S-adenosyl-L-methionine = 2-methylsulfanyl-N(6)-dimethylallyladenosine(37) in tRNA + (sulfur carrier)-H + 5'-deoxyadenosine + L-methionine + A + S-adenosyl-L-homocysteine + 2 H(+). Catalyzes the methylthiolation of N6-(dimethylallyl)adenosine (i(6)A), leading to the formation of 2-methylthio-N6-(dimethylallyl)adenosine (ms(2)i(6)A) at position 37 in tRNAs that read codons beginning with uridine. The sequence is that of tRNA-2-methylthio-N(6)-dimethylallyladenosine synthase from Polynucleobacter asymbioticus (strain DSM 18221 / CIP 109841 / QLW-P1DMWA-1) (Polynucleobacter necessarius subsp. asymbioticus).